We begin with the raw amino-acid sequence, 323 residues long: C-type lectin domain family 11 member A (323 aa).

An N-terminal signal peptide occupies residues 1 to 21 (MQAAWLLGALVVPQLLGFGHG). Disordered stretches follow at residues 55 to 106 (LGLP…TPED) and 272 to 295 (LGAQPSASPHPLSPDQPNGGTLEN). Positions 61 to 63 (RGD) match the Cell attachment site motif. Over residues 74 to 90 (EDWEMEEDQGEEEEEEA) the composition is skewed to acidic residues. The region spanning 183 to 320 (LGHKCFLLSR…CQRRLYYVCE (138 aa)) is the C-type lectin domain. 2 cysteine pairs are disulfide-bonded: Cys-204/Cys-319 and Cys-296/Cys-311.

Post-translationally, O-glycosylated. Probably sulfated on the O-glycans. As to expression, expressed in skeletal tissues including bone marrow, chondrocytes, primary ossification center-associated cells, the perichondrium and periosteum. Lower levels of expression were detected in spleen, thymus, appendix and fetal liver.

It localises to the cytoplasm. The protein localises to the secreted. Promotes osteogenesis by stimulating the differentiation of mesenchymal progenitors into mature osteoblasts. Important for repair and maintenance of adult bone. This is C-type lectin domain family 11 member A (CLEC11A) from Homo sapiens (Human).